A 659-amino-acid polypeptide reads, in one-letter code: Enzymatic polyprotein (659 aa).

Residues 1-180 (MSLRNRTNPN…FLEEGGNHVD (180 aa)) are protease. Residue D34 is part of the active site. Positions 252-436 (LELKVIKPSK…EKINFLGLEI (185 aa)) constitute a Reverse transcriptase domain.

It belongs to the caulimoviridae enzymatic polyprotein family.

The catalysed reaction is DNA(n) + a 2'-deoxyribonucleoside 5'-triphosphate = DNA(n+1) + diphosphate. Encodes for at least two polypeptides: protease (PR) and reverse transcriptase (RT). The protease processes the polyprotein in cis. Reverse transcriptase is multifunctional enzyme that converts the viral RNA genome into dsDNA in viral cytoplasmic capsids. This enzyme displays a DNA polymerase activity that can copy either DNA or RNA templates, and a ribonuclease H (RNase H) activity that cleaves the RNA strand of RNA-DNA heteroduplexes in a partially processive 3'- to 5'-endonucleasic mode. Neo-synthesized pregenomic RNA (pgRNA) are encapsidated, and reverse-transcribed inside the nucleocapsid. Partial (+)DNA is synthesized from the (-)DNA template and generates the relaxed circular DNA (RC-DNA) genome. After budding and infection, the RC-DNA migrates in the nucleus, and is converted into a plasmid-like covalently closed circular DNA (cccDNA). This chain is Enzymatic polyprotein, found in Dianthus caryophyllus (Carnation).